The chain runs to 528 residues: Lanosterol 14-alpha demethylase (528 aa).

Position 470 (Cys470) interacts with heme.

The protein belongs to the cytochrome P450 family. It depends on heme as a cofactor.

The protein localises to the membrane. The catalysed reaction is a 14alpha-methyl steroid + 3 reduced [NADPH--hemoprotein reductase] + 3 O2 = a Delta(14) steroid + formate + 3 oxidized [NADPH--hemoprotein reductase] + 4 H2O + 4 H(+). It carries out the reaction a 14alpha-methyl steroid + reduced [NADPH--hemoprotein reductase] + O2 = a 14alpha-hydroxymethyl steroid + oxidized [NADPH--hemoprotein reductase] + H2O + H(+). The enzyme catalyses a 14alpha-hydroxymethyl steroid + reduced [NADPH--hemoprotein reductase] + O2 = a 14alpha-formyl steroid + oxidized [NADPH--hemoprotein reductase] + 2 H2O + H(+). It catalyses the reaction a 14alpha-formyl steroid + reduced [NADPH--hemoprotein reductase] + O2 = a Delta(14) steroid + formate + oxidized [NADPH--hemoprotein reductase] + H2O + 2 H(+). The catalysed reaction is lanosterol + 3 reduced [NADPH--hemoprotein reductase] + 3 O2 = 4,4-dimethyl-5alpha-cholesta-8,14,24-trien-3beta-ol + formate + 3 oxidized [NADPH--hemoprotein reductase] + 4 H2O + 4 H(+). It carries out the reaction lanosterol + reduced [NADPH--hemoprotein reductase] + O2 = 32-hydroxylanosterol + oxidized [NADPH--hemoprotein reductase] + H2O + H(+). The enzyme catalyses 32-hydroxylanosterol + reduced [NADPH--hemoprotein reductase] + O2 = 32-oxolanosterol + oxidized [NADPH--hemoprotein reductase] + 2 H2O + H(+). It catalyses the reaction 32-oxolanosterol + reduced [NADPH--hemoprotein reductase] + O2 = 4,4-dimethyl-5alpha-cholesta-8,14,24-trien-3beta-ol + formate + oxidized [NADPH--hemoprotein reductase] + H2O + 2 H(+). The catalysed reaction is eburicol + 3 reduced [NADPH--hemoprotein reductase] + 3 O2 = 14-demethyleburicol + formate + 3 oxidized [NADPH--hemoprotein reductase] + 4 H2O + 4 H(+). It carries out the reaction eburicol + reduced [NADPH--hemoprotein reductase] + O2 = 32-hydroxyeburicol + oxidized [NADPH--hemoprotein reductase] + H2O + H(+). The enzyme catalyses 32-hydroxyeburicol + reduced [NADPH--hemoprotein reductase] + O2 = 32-oxoeburicol + oxidized [NADPH--hemoprotein reductase] + 2 H2O + H(+). It catalyses the reaction 32-oxoeburicol + reduced [NADPH--hemoprotein reductase] + O2 = 14-demethyleburicol + formate + oxidized [NADPH--hemoprotein reductase] + H2O + 2 H(+). It functions in the pathway steroid biosynthesis; zymosterol biosynthesis; zymosterol from lanosterol: step 1/6. Functionally, sterol 14alpha-demethylase that plays a critical role in the third module of ergosterol biosynthesis pathway, being ergosterol the major sterol component in fungal membranes that participates in a variety of functions. The third module or late pathway involves the ergosterol synthesis itself through consecutive reactions that mainly occur in the endoplasmic reticulum (ER) membrane. In filamentous fungi, during the initial step of this module, lanosterol (lanosta-8,24-dien-3beta-ol) can be metabolized to eburicol. Sterol 14alpha-demethylase catalyzes the three-step oxidative removal of the 14alpha-methyl group (C-32) of both these sterols in the form of formate, and converts eburicol and lanosterol to 14-demethyleburicol (4,4,24-trimethylergosta-8,14,24(28)-trienol) and 4,4-dimethyl-5alpha-cholesta-8,14,24-trien-3beta-ol, respectively, which are further metabolized by other enzymes in the pathway to ergosterol. Can also use substrates not intrinsic to fungi, such as 24,25-dihydrolanosterol (DHL), producing 4,4-dimethyl-8,14-cholestadien-3-beta-ol, but at lower rates than the endogenous substrates. This Candida tropicalis (Yeast) protein is Lanosterol 14-alpha demethylase (ERG11).